The sequence spans 188 residues: dTTP/UTP pyrophosphatase (188 aa).

Catalysis depends on aspartate 67, which acts as the Proton acceptor.

The protein belongs to the Maf family. YhdE subfamily. Requires a divalent metal cation as cofactor.

It is found in the cytoplasm. The enzyme catalyses dTTP + H2O = dTMP + diphosphate + H(+). The catalysed reaction is UTP + H2O = UMP + diphosphate + H(+). Its function is as follows. Nucleoside triphosphate pyrophosphatase that hydrolyzes dTTP and UTP. May have a dual role in cell division arrest and in preventing the incorporation of modified nucleotides into cellular nucleic acids. This chain is dTTP/UTP pyrophosphatase, found in Thermococcus kodakarensis (strain ATCC BAA-918 / JCM 12380 / KOD1) (Pyrococcus kodakaraensis (strain KOD1)).